The primary structure comprises 588 residues: UvrABC system protein C (588 aa).

Positions 12-89 constitute a GIY-YIG domain; that stretch reads SKPGCYLYLN…IKKYRPKYNV (78 aa). Positions 194 to 229 constitute a UVR domain; the sequence is NEVKTLLTNQMHKAAENLQFEEAQRIKEQIISLDFT.

It belongs to the UvrC family. As to quaternary structure, interacts with UvrB in an incision complex.

It is found in the cytoplasm. The UvrABC repair system catalyzes the recognition and processing of DNA lesions. UvrC both incises the 5' and 3' sides of the lesion. The N-terminal half is responsible for the 3' incision and the C-terminal half is responsible for the 5' incision. The sequence is that of UvrABC system protein C from Mesoplasma florum (strain ATCC 33453 / NBRC 100688 / NCTC 11704 / L1) (Acholeplasma florum).